Reading from the N-terminus, the 365-residue chain is Chorismate synthase (365 aa).

An NADP(+)-binding site is contributed by Arg46. FMN contacts are provided by residues 123-125, 241-242, Gly281, 296-300, and Arg322; these read RSS, NG, and KPTPS.

It belongs to the chorismate synthase family. In terms of assembly, homotetramer. Requires FMNH2 as cofactor.

The catalysed reaction is 5-O-(1-carboxyvinyl)-3-phosphoshikimate = chorismate + phosphate. The protein operates within metabolic intermediate biosynthesis; chorismate biosynthesis; chorismate from D-erythrose 4-phosphate and phosphoenolpyruvate: step 7/7. Functionally, catalyzes the anti-1,4-elimination of the C-3 phosphate and the C-6 proR hydrogen from 5-enolpyruvylshikimate-3-phosphate (EPSP) to yield chorismate, which is the branch point compound that serves as the starting substrate for the three terminal pathways of aromatic amino acid biosynthesis. This reaction introduces a second double bond into the aromatic ring system. The chain is Chorismate synthase from Helicobacter pylori (strain G27).